A 664-amino-acid chain; its full sequence is MRNLGIAVTFAVLLVIGYVTALEWDAVVTTDSGILFFDKNWTQISSGGHQFHHISAFAYDEVKRKLYFSDLKDPSFRIFSLDTKPEEEYHKVAKLLPKSDQTGYITGLAFDHLERKLYWTEKGTHSVYSVEVDKLGAPANATDGLINLVAQVEENHDLAALTIDECRRHLYWTNSYLQTSSIVRAAMNGTVLDDHKEDVYEPRGISVDHYNNRIYWVEKKYGRAFTVESANLEVQDRQTFLRGEDKIPTHVSPNSQYLYWIDQEDGEVHETMKSDSKVTRVVYKGSRPSALIIRSGLLVEYQKNNPSCKAVVSEIIDNVRKESSEVKDVAQAVTSKPEMITCLNKGILNHNTNSCICLPEYQGTFCEIPICNNFCVHGECVVGADSRPMCKCHAEFEGERCDRNICDGYCLNNGRCALSATGQRSCTCSKNFSGARCETAICTSDYCYNGECFVENEVPECKCNVGYRGDRCEEYTCNNYCLHDGTCILNNDTMLVECRCGSEYTGKRCEIPKRFCSLDNGNPEMQQYCEGVAIAKNLVEPQVTYCKNSFNRTVVYVSLAFTASLVTLVTILCTVRRMYERNRPRITKRFKVTNNTQMTSRPATQCEITIENCCNMNVCETPCFDTKILQKSATKAEDKQFLLDDIESIAGSYRKLPSCVAEKN.

Residues 1 to 21 (MRNLGIAVTFAVLLVIGYVTA) form the signal peptide. Over 22–552 (LEWDAVVTTD…VTYCKNSFNR (531 aa)) the chain is Extracellular. 3 N-linked (GlcNAc...) asparagine glycosylation sites follow: Asn-40, Asn-140, and Asn-188. 3 LDL-receptor class B repeats span residues 115–157 (RKLY…ENHD), 168–211 (RHLY…DHYN), and 212–257 (NRIY…NSQY). EGF-like domains follow at residues 367–399 (EIPI…FEGE), 402–438 (DRNI…ARCE), and 473–510 (EEYT…KRCE). 8 cysteine pairs are disulfide-bonded: Cys-371-Cys-380, Cys-375-Cys-390, Cys-406-Cys-416, Cys-410-Cys-426, Cys-428-Cys-437, Cys-477-Cys-487, Cys-481-Cys-498, and Cys-500-Cys-509. The N-linked (GlcNAc...) asparagine glycan is linked to Asn-431. The N-linked (GlcNAc...) asparagine glycan is linked to Asn-491. A glycan (N-linked (GlcNAc...) asparagine) is linked at Asn-551. The chain crosses the membrane as a helical span at residues 553–573 (TVVYVSLAFTASLVTLVTILC). Over 574–664 (TVRRMYERNR…KLPSCVAEKN (91 aa)) the chain is Cytoplasmic.

It belongs to the cueball family.

The protein resides in the cell membrane. Has a role in spermatogenesis and oogenesis. The protein is Protein cueball of Aedes aegypti (Yellowfever mosquito).